The chain runs to 600 residues: CDK5RAP1-like protein (600 aa).

The disordered stretch occupies residues 45–66 (LSSAAHPPPPPPRRLARSGPSR). The MTTase N-terminal domain maps to 93–222 (GRIYHETYGC…LPRLLQEVDY (130 aa)). Positions 102, 139, 185, 260, 264, and 267 each coordinate [4Fe-4S] cluster. Positions 246 to 501 (SDNSVTAFVS…ISTFRETTAK (256 aa)) constitute a Radical SAM core domain. Residues 504-580 (DSQVGTVQLV…TASLSGDVIA (77 aa)) enclose the TRAM domain.

This sequence belongs to the methylthiotransferase family. MiaB subfamily. [4Fe-4S] cluster is required as a cofactor.

Potential regulator of CDK5 activity. The polypeptide is CDK5RAP1-like protein (Oryza sativa subsp. japonica (Rice)).